A 442-amino-acid polypeptide reads, in one-letter code: UDP-N-acetylmuramoylalanine--D-glutamate ligase (442 aa).

The protein belongs to the MurCDEF family.

Its subcellular location is the cytoplasm. It catalyses the reaction UDP-N-acetyl-alpha-D-muramoyl-L-alanine + D-glutamate + ATP = UDP-N-acetyl-alpha-D-muramoyl-L-alanyl-D-glutamate + ADP + phosphate + H(+). It participates in cell wall biogenesis; peptidoglycan biosynthesis. In terms of biological role, cell wall formation. Catalyzes the addition of glutamate to the nucleotide precursor UDP-N-acetylmuramoyl-L-alanine (UMA). This Buchnera aphidicola subsp. Baizongia pistaciae (strain Bp) protein is UDP-N-acetylmuramoylalanine--D-glutamate ligase.